A 326-amino-acid polypeptide reads, in one-letter code: Meiotically up-regulated gene 113 protein (326 aa).

It is found in the cytoplasm. Has a role in meiosis. The polypeptide is Meiotically up-regulated gene 113 protein (mug113) (Schizosaccharomyces pombe (strain 972 / ATCC 24843) (Fission yeast)).